The primary structure comprises 514 residues: Extracellular exo-inulinase inuE (514 aa).

The N-terminal stretch at 1–18 is a signal peptide; the sequence is MRAFLALIFLTFVMNVES. Substrate is bound by residues 33-34 and Gln52; that span reads ND. The active-site Nucleophile is the Asp34. Asn56 is a glycosylation site (N-linked (GlcNAc...) asparagine). Substrate is bound by residues Trp60 and Ser95. N-linked (GlcNAc...) asparagine glycosylation is found at Asn104 and Asn110. 162–163 lines the substrate pocket; the sequence is RD. N-linked (GlcNAc...) asparagine glycans are attached at residues Asn197 and Asn203. Substrate contacts are provided by Glu214 and Trp300. The Proton donor/acceptor role is filled by Glu214. N-linked (GlcNAc...) asparagine glycans are attached at residues Asn357, Asn371, Asn389, and Asn422.

It belongs to the glycosyl hydrolase 32 family.

Its subcellular location is the secreted. It carries out the reaction Hydrolysis of terminal, non-reducing (2-&gt;1)- and (2-&gt;6)-linked beta-D-fructofuranose residues in fructans.. Functionally, exo-inulinase involved in utilization of the plant storage polymer inulin, consisting of fructooligosaccharides with a degree of polymerization (DP) value from 2 to 60. Splits off terminal fructose units successively from the non-reducing end of the inulin molecule. This Meyerozyma guilliermondii (Yeast) protein is Extracellular exo-inulinase inuE.